A 154-amino-acid chain; its full sequence is Myoglobin (154 aa).

A Globin domain is found at 2-148; sequence GLSDGEWQLV…FRNDMAAKYK (147 aa). Position 4 is a phosphoserine (Ser4). His65 is a binding site for nitrite. An O2-binding site is contributed by His65. Position 68 is a phosphothreonine (Thr68). His94 lines the heme b pocket.

Belongs to the globin family. In terms of assembly, monomeric.

The protein localises to the cytoplasm. It is found in the sarcoplasm. It catalyses the reaction Fe(III)-heme b-[protein] + nitric oxide + H2O = Fe(II)-heme b-[protein] + nitrite + 2 H(+). The enzyme catalyses H2O2 + AH2 = A + 2 H2O. Its function is as follows. Monomeric heme protein which primary function is to store oxygen and facilitate its diffusion within muscle tissues. Reversibly binds oxygen through a pentacoordinated heme iron and enables its timely and efficient release as needed during periods of heightened demand. Depending on the oxidative conditions of tissues and cells, and in addition to its ability to bind oxygen, it also has a nitrite reductase activity whereby it regulates the production of bioactive nitric oxide. Under stress conditions, like hypoxia and anoxia, it also protects cells against reactive oxygen species thanks to its pseudoperoxidase activity. This chain is Myoglobin (MB), found in Ochotona curzoniae (Black-lipped pika).